The primary structure comprises 445 residues: Xylose isomerase (445 aa).

Residues histidine 107 and aspartate 110 contribute to the active site. Glutamate 238, glutamate 274, histidine 277, aspartate 302, aspartate 313, aspartate 315, and aspartate 345 together coordinate Mg(2+).

This sequence belongs to the xylose isomerase family. As to quaternary structure, homotetramer. Mg(2+) is required as a cofactor.

The protein localises to the cytoplasm. The catalysed reaction is alpha-D-xylose = alpha-D-xylulofuranose. The protein is Xylose isomerase (xylA) of Bacillus spizizenii (strain ATCC 23059 / NRRL B-14472 / W23) (Bacillus subtilis subsp. spizizenii).